A 556-amino-acid polypeptide reads, in one-letter code: 2-succinyl-5-enolpyruvyl-6-hydroxy-3-cyclohexene-1-carboxylate synthase (556 aa).

Belongs to the TPP enzyme family. MenD subfamily. In terms of assembly, homodimer. Mg(2+) serves as cofactor. Requires Mn(2+) as cofactor. It depends on thiamine diphosphate as a cofactor.

The catalysed reaction is isochorismate + 2-oxoglutarate + H(+) = 5-enolpyruvoyl-6-hydroxy-2-succinyl-cyclohex-3-ene-1-carboxylate + CO2. It functions in the pathway quinol/quinone metabolism; 1,4-dihydroxy-2-naphthoate biosynthesis; 1,4-dihydroxy-2-naphthoate from chorismate: step 2/7. The protein operates within quinol/quinone metabolism; menaquinone biosynthesis. In terms of biological role, catalyzes the thiamine diphosphate-dependent decarboxylation of 2-oxoglutarate and the subsequent addition of the resulting succinic semialdehyde-thiamine pyrophosphate anion to isochorismate to yield 2-succinyl-5-enolpyruvyl-6-hydroxy-3-cyclohexene-1-carboxylate (SEPHCHC). The chain is 2-succinyl-5-enolpyruvyl-6-hydroxy-3-cyclohexene-1-carboxylate synthase from Salmonella heidelberg (strain SL476).